The chain runs to 546 residues: Chaperonin GroEL (546 aa).

ATP contacts are provided by residues 29–32, Lys-50, 86–90, Gly-414, 477–479, and Asp-493; these read TLGP, DGTTT, and NAA.

Belongs to the chaperonin (HSP60) family. Forms a cylinder of 14 subunits composed of two heptameric rings stacked back-to-back. Interacts with the co-chaperonin GroES.

It localises to the cytoplasm. The enzyme catalyses ATP + H2O + a folded polypeptide = ADP + phosphate + an unfolded polypeptide.. Its function is as follows. Together with its co-chaperonin GroES, plays an essential role in assisting protein folding. The GroEL-GroES system forms a nano-cage that allows encapsulation of the non-native substrate proteins and provides a physical environment optimized to promote and accelerate protein folding. The polypeptide is Chaperonin GroEL (Geobacter metallireducens (strain ATCC 53774 / DSM 7210 / GS-15)).